We begin with the raw amino-acid sequence, 285 residues long: Acetyl-coenzyme A carboxylase carboxyl transferase subunit beta (285 aa).

Residues 22–285 (LWTKCEACGA…HPGVAYAPGV (264 aa)) enclose the CoA carboxyltransferase N-terminal domain. The Zn(2+) site is built by Cys-26, Cys-29, Cys-45, and Cys-48. Residues 26–48 (CEACGAQIYKKEFQENLHVCPKC) form a C4-type zinc finger.

This sequence belongs to the AccD/PCCB family. Acetyl-CoA carboxylase is a heterohexamer composed of biotin carboxyl carrier protein (AccB), biotin carboxylase (AccC) and two subunits each of ACCase subunit alpha (AccA) and ACCase subunit beta (AccD). Requires Zn(2+) as cofactor.

It is found in the cytoplasm. It carries out the reaction N(6)-carboxybiotinyl-L-lysyl-[protein] + acetyl-CoA = N(6)-biotinyl-L-lysyl-[protein] + malonyl-CoA. Its pathway is lipid metabolism; malonyl-CoA biosynthesis; malonyl-CoA from acetyl-CoA: step 1/1. Functionally, component of the acetyl coenzyme A carboxylase (ACC) complex. Biotin carboxylase (BC) catalyzes the carboxylation of biotin on its carrier protein (BCCP) and then the CO(2) group is transferred by the transcarboxylase to acetyl-CoA to form malonyl-CoA. The sequence is that of Acetyl-coenzyme A carboxylase carboxyl transferase subunit beta from Thermus thermophilus (strain ATCC 27634 / DSM 579 / HB8).